The primary structure comprises 184 residues: Adenine phosphoribosyltransferase (184 aa).

It belongs to the purine/pyrimidine phosphoribosyltransferase family. As to quaternary structure, homodimer.

Its subcellular location is the cytoplasm. The enzyme catalyses AMP + diphosphate = 5-phospho-alpha-D-ribose 1-diphosphate + adenine. Its pathway is purine metabolism; AMP biosynthesis via salvage pathway; AMP from adenine: step 1/1. In terms of biological role, catalyzes a salvage reaction resulting in the formation of AMP, that is energically less costly than de novo synthesis. The sequence is that of Adenine phosphoribosyltransferase from Paracidovorax citrulli (strain AAC00-1) (Acidovorax citrulli).